Reading from the N-terminus, the 625-residue chain is Chaperone protein HtpG (625 aa).

Positions 1-337 (MNIQKKEVYS…SNNLPLNVSR (337 aa)) are a; substrate-binding. The segment at 338–552 (EILQDNSITQ…SNEMSTQMAK (215 aa)) is b. The interval 553–625 (LFSAAGQSVP…ARTNKLILEQ (73 aa)) is c.

This sequence belongs to the heat shock protein 90 family. As to quaternary structure, homodimer.

The protein resides in the cytoplasm. Molecular chaperone. Has ATPase activity. The sequence is that of Chaperone protein HtpG from Buchnera aphidicola subsp. Schizaphis graminum (strain Sg).